Consider the following 392-residue polypeptide: CD2 homolog (392 aa).

Residues 1-16 (MIIKLIFLICFKIVLS) form the signal peptide. Over 17 to 222 (IDNKTKFNET…YLDFFQVTSY (206 aa)) the chain is Extracellular. N-linked (GlcNAc...) asparagine; by host glycosylation is found at Asn-39, Asn-88, Asn-92, Asn-106, Asn-148, Asn-159, Asn-183, Asn-191, Asn-198, and Asn-204. 2 disulfides stabilise this stretch: Cys-137–Cys-205 and Cys-144–Cys-188. The helical transmembrane segment at 223–243 (IFYMIIFIVTGITVSILISII) threads the bilayer. Over 244–392 (TFLFIRKRKH…ISLIHVDRII (149 aa)) the chain is Cytoplasmic. Residues 258–290 (ESPPPESNEEEQQCHHDTTSIHEPSPREPLLPK) are disordered. The segment covering 269–283 (QQCHHDTTSIHEPSP) has biased composition (basic and acidic residues). 5 consecutive repeat copies span residues 319-324 (KPCPPP), 325-330 (KPCPPP), 331-336 (KPCPPP), 337-342 (KPCPPS), and 343-348 (KPCPPP). Residues 319–348 (KPCPPPKPCPPPKPCPPPKPCPPSKPCPPP) are 5 X 6 AA tandem repeats of K-P-C-[PRS]-[P]-[PS]. The segment at 328–357 (PPPKPCPPPKPCPPSKPCPPPEPYSPPKPC) is disordered.

Belongs to the asfivirus CD2 homolog protein family. Both glycosylated and nonglycosylated forms interact (via C-terminus) with the host AP-1 complex. Cleaved into two fragments of 63 kDa and 26 kDa containing respectively the glycosylated N-terminus and the nonglycosylated C-terminus. A full-length 89-kDa glycosylated form also exists.

The protein resides in the host cell membrane. It is found in the virion membrane. Its subcellular location is the host Golgi apparatus. In terms of biological role, may play an immunosuppressive role by inhibiting lymphocyte proliferation and subsequently facilitating viral replication and generalization of infection. Responsible for viral hemadsorption, which may help viral spread. Increases virus replication in the tick vector at the step of virus uptake or replication in the tick gut. May play a role in the host Golgi reorganization to yield viral factories. May play a role in host cell penetration. The protein is CD2 homolog of Ornithodoros (relapsing fever ticks).